Reading from the N-terminus, the 403-residue chain is 26S proteasome regulatory subunit 8 homolog (403 aa).

Residue Gly-186–Thr-193 coordinates ATP.

Belongs to the AAA ATPase family.

The protein resides in the cytoplasm. Its subcellular location is the nucleus. Its function is as follows. The 26S proteasome is involved in the ATP-dependent degradation of ubiquitinated proteins. The regulatory (or ATPase) complex confers ATP dependency and substrate specificity to the 26S complex. The polypeptide is 26S proteasome regulatory subunit 8 homolog (let1) (Schizosaccharomyces pombe (strain 972 / ATCC 24843) (Fission yeast)).